The chain runs to 367 residues: Developmentally-regulated GTP-binding protein 1 (367 aa).

The segment at 2–16 (SGTLARIAEIEAEMA) is required for interaction with STK16. The region spanning 65–290 (ARIGFVGFPS…LLEKIWDYLQ (226 aa)) is the OBG-type G domain. GTP-binding positions include 71-78 (GFPSVGKS), 96-100 (FTTLT), 117-120 (DLPG), 248-251 (NKID), and 271-273 (SAH). 2 residues coordinate Mg(2+): Ser78 and Thr98. A TGS domain is found at 290-366 (QLVRIYTKPK…EDEDVIQIVK (77 aa)).

Belongs to the TRAFAC class OBG-HflX-like GTPase superfamily. OBG GTPase family. It depends on Mg(2+) as a cofactor. K(+) serves as cofactor. As to expression, expressed in many adult amd embryonic tissues. In adults, highest levels in ovaries and testes, followed by skeletal muscle, stomach, brain, kidney and liver. Weak expression in heart and brain.

The protein resides in the nucleus. It is found in the cytoplasm. The enzyme catalyses GTP + H2O = GDP + phosphate + H(+). Its function is as follows. Catalyzes the conversion of GTP to GDP through hydrolysis of the gamma-phosphate bond in GTP. Binds to microtubules and promotes microtubule polymerization and bundling. GTPase activity is not necessary for these microtubule-related functions. The chain is Developmentally-regulated GTP-binding protein 1 (drg1) from Xenopus laevis (African clawed frog).